The primary structure comprises 340 residues: Uroporphyrinogen decarboxylase (340 aa).

Substrate contacts are provided by residues 21–25, F40, D71, Y147, S202, and H316; that span reads RQAGR.

This sequence belongs to the uroporphyrinogen decarboxylase family. Homodimer.

It localises to the cytoplasm. It carries out the reaction uroporphyrinogen III + 4 H(+) = coproporphyrinogen III + 4 CO2. It functions in the pathway porphyrin-containing compound metabolism; protoporphyrin-IX biosynthesis; coproporphyrinogen-III from 5-aminolevulinate: step 4/4. In terms of biological role, catalyzes the decarboxylation of four acetate groups of uroporphyrinogen-III to yield coproporphyrinogen-III. This is Uroporphyrinogen decarboxylase from Helicobacter hepaticus (strain ATCC 51449 / 3B1).